Reading from the N-terminus, the 282-residue chain is 4-hydroxybenzoate octaprenyltransferase (282 aa).

Helical transmembrane passes span 17-37 (IGIL…NQGF), 40-60 (IDLL…GCVI), 90-110 (AFIL…KLPI), 113-133 (FYFA…KRFL), 135-155 (APQL…FIAS), 163-183 (FVVL…MYAM), 207-227 (LIIA…AINK), 231-251 (WFFY…LKLI), and 262-282 (AFLV…LALI).

The protein belongs to the UbiA prenyltransferase family. Mg(2+) is required as a cofactor.

The protein resides in the cell inner membrane. The enzyme catalyses all-trans-octaprenyl diphosphate + 4-hydroxybenzoate = 4-hydroxy-3-(all-trans-octaprenyl)benzoate + diphosphate. The protein operates within cofactor biosynthesis; ubiquinone biosynthesis. Functionally, catalyzes the prenylation of para-hydroxybenzoate (PHB) with an all-trans polyprenyl group. Mediates the second step in the final reaction sequence of ubiquinone-8 (UQ-8) biosynthesis, which is the condensation of the polyisoprenoid side chain with PHB, generating the first membrane-bound Q intermediate 3-octaprenyl-4-hydroxybenzoate. The polypeptide is 4-hydroxybenzoate octaprenyltransferase (Legionella pneumophila (strain Paris)).